The sequence spans 123 residues: Small ribosomal subunit protein uS12 (123 aa).

Asp89 carries the 3-methylthioaspartic acid modification.

The protein belongs to the universal ribosomal protein uS12 family. Part of the 30S ribosomal subunit. Contacts proteins S8 and S17. May interact with IF1 in the 30S initiation complex.

Its function is as follows. With S4 and S5 plays an important role in translational accuracy. Interacts with and stabilizes bases of the 16S rRNA that are involved in tRNA selection in the A site and with the mRNA backbone. Located at the interface of the 30S and 50S subunits, it traverses the body of the 30S subunit contacting proteins on the other side and probably holding the rRNA structure together. The combined cluster of proteins S8, S12 and S17 appears to hold together the shoulder and platform of the 30S subunit. In Rhizobium etli (strain ATCC 51251 / DSM 11541 / JCM 21823 / NBRC 15573 / CFN 42), this protein is Small ribosomal subunit protein uS12.